The following is a 511-amino-acid chain: Maturase K (511 aa).

It belongs to the intron maturase 2 family. MatK subfamily.

It is found in the plastid. The protein localises to the chloroplast. Usually encoded in the trnK tRNA gene intron. Probably assists in splicing its own and other chloroplast group II introns. The polypeptide is Maturase K (Campsis radicans (Trumpet creeper)).